The following is a 115-amino-acid chain: NADH-ubiquinone oxidoreductase chain 3 (115 aa).

A run of 3 helical transmembrane segments spans residues 4-24, 55-75, and 84-104; these read ALTL…AFWL, FFLV…LLPL, and LTTM…SLAY.

This sequence belongs to the complex I subunit 3 family. As to quaternary structure, core subunit of respiratory chain NADH dehydrogenase (Complex I) which is composed of 45 different subunits. Interacts with TMEM186. Interacts with TMEM242.

Its subcellular location is the mitochondrion inner membrane. It catalyses the reaction a ubiquinone + NADH + 5 H(+)(in) = a ubiquinol + NAD(+) + 4 H(+)(out). Functionally, core subunit of the mitochondrial membrane respiratory chain NADH dehydrogenase (Complex I) which catalyzes electron transfer from NADH through the respiratory chain, using ubiquinone as an electron acceptor. Essential for the catalytic activity of complex I. The polypeptide is NADH-ubiquinone oxidoreductase chain 3 (Phoca vitulina (Harbor seal)).